Here is a 425-residue protein sequence, read N- to C-terminus: Nicotinate dehydrogenase large molybdopterin subunit (425 aa).

Residues Gln208 and 238–240 (GFG) each bind Se-Mo-molybdopterin cytosine dinucleotide.

It belongs to the xanthine dehydrogenase family. Heterooctamer of NDHM, NDHL, NDHS and NDHF. Dimer of heterotetramers. Se-Mo-molybdopterin cytosine dinucleotide is required as a cofactor.

It carries out the reaction nicotinate + NADP(+) + H2O = 6-hydroxynicotinate + NADPH + H(+). It participates in cofactor degradation; nicotinate degradation; 6-hydroxynicotinate from nicotinate: step 1/1. With respect to regulation, reversibly inactivated by selenide and sulfide. Not inhibited by cyanide. Catalyzes the hydroxylation of nicotinate to 6-hydroxynicotinate. Also active against 2-pyrazinecarboxylic acid, but inactive against other nicotinate analogs. This chain is Nicotinate dehydrogenase large molybdopterin subunit (ndhL), found in Eubacterium barkeri (Clostridium barkeri).